The chain runs to 515 residues: Maturase K (515 aa).

Belongs to the intron maturase 2 family. MatK subfamily.

It localises to the plastid. The protein localises to the chloroplast. In terms of biological role, usually encoded in the trnK tRNA gene intron. Probably assists in splicing its own and other chloroplast group II introns. This chain is Maturase K, found in Pinus uncinata (Mountain pine).